The primary structure comprises 177 residues: Large ribosomal subunit protein uL6 (177 aa).

This sequence belongs to the universal ribosomal protein uL6 family. Part of the 50S ribosomal subunit.

This protein binds to the 23S rRNA, and is important in its secondary structure. It is located near the subunit interface in the base of the L7/L12 stalk, and near the tRNA binding site of the peptidyltransferase center. This chain is Large ribosomal subunit protein uL6, found in Azorhizobium caulinodans (strain ATCC 43989 / DSM 5975 / JCM 20966 / LMG 6465 / NBRC 14845 / NCIMB 13405 / ORS 571).